We begin with the raw amino-acid sequence, 465 residues long: Cysteine--tRNA ligase (465 aa).

Cys29 serves as a coordination point for Zn(2+). A 'HIGH' region motif is present at residues 31 to 41 (PTVYNYIHIGN). 3 residues coordinate Zn(2+): Cys209, His234, and Glu238. Residues 266–270 (KMSKS) carry the 'KMSKS' region motif. Position 269 (Lys269) interacts with ATP. Ser270 carries the phosphoserine modification.

Belongs to the class-I aminoacyl-tRNA synthetase family. Monomer. The cofactor is Zn(2+).

It localises to the cytoplasm. It catalyses the reaction tRNA(Cys) + L-cysteine + ATP = L-cysteinyl-tRNA(Cys) + AMP + diphosphate. The protein is Cysteine--tRNA ligase of Bacillus cereus (strain G9842).